Here is a 445-residue protein sequence, read N- to C-terminus: Exodeoxyribonuclease 7 large subunit (445 aa).

This sequence belongs to the XseA family. In terms of assembly, heterooligomer composed of large and small subunits.

The protein localises to the cytoplasm. The catalysed reaction is Exonucleolytic cleavage in either 5'- to 3'- or 3'- to 5'-direction to yield nucleoside 5'-phosphates.. Its function is as follows. Bidirectionally degrades single-stranded DNA into large acid-insoluble oligonucleotides, which are then degraded further into small acid-soluble oligonucleotides. This is Exodeoxyribonuclease 7 large subunit from Staphylococcus haemolyticus (strain JCSC1435).